A 1355-amino-acid polypeptide reads, in one-letter code: MLSFVDLRSVLLLAVTLYLVTCQEVRRGPRGDKGPPGEQGPPGIPGRDGEDGLPGLPGPPGVPGLGGNFAAQYDPSKSAEPGQQGIMGPRGPPGPPGSPGSQGFQGLPGENGEPGQTGPVGSRGPSGAPGKAGEDGHPGKSGRPGERGPVGPQGARGFPGTPGLPGFKGIRGHTGSDGQKGAPGAAGVKGENGANGDNGSPGQAGARGLPGERGRIGPAGSAGSRGSDGSSGPVGPAGPIGSAGAPGLPGAPGAKGELGPAGNNGPTGAAGGRGEPGPPGSLGPAGPPGNPGTNGVNGAKGTAGLPGVGGAPGLPGGRGIPGPAGPAGPSGARGLAGDPGIAGGKGDTGSKGEPGSVGQQGPAGPSGEEGKRGPNGEAGSSGPSGNAGIRGVPGTRGLPGPDGRAGGIGPAGSRGSSGPPGARGPNGDAGRPGEPGLLGARGLPGFSGSNGPQGKEGPAGPQGIEGRSGAAGPAGARGEPGAIGFPGPKGPNGEPGKNGDKGNQGPSGNRGAPGPDGNNGAQGPAGLGGATGEKGEQGPSGAPGFQGLPGPGGPPGEVGKPGERGAPGDFGPPGSAGTRGERGAPGESGGAGPHGPSGSRGPSGAPGPDGQKGEPGAAGLNGGLGPSGPAGIPGERGTAGTPGTKGEKGDAGNSGDYGNPGRDGARGPAGAAGAPGPAGGPGDRGESGPAGPSGVAGPRGAPGERGEAGPAGPTGFAGPPGAAGHTGAKGDRGAKGPKGEAGSPGPLGAHGSAGPAGPNGPAGSTGARGDAGPSGATGFPGPAGRAGAPGPPGNVGPSGPTGHPGKDGSRGPRGDSGPVGRPGEQGQHGPVGLAGDKGPSGEAGPAGPPGAAGPSGVLGARGILGLPGTRGERGLPGGPGSNGEPGPSGLAGSSGPRGPPGSVGSPGPVGHSGEAGRDGHPGNDGPPGRDGLPGAKGERGYPGNTGPSGLAGAPGPAGSAGPAGKSGNRGEGGPSGPAGITGPSGPRGPAGPQGVRGDKGEAGERGARGLDGRKGHNGLSGLPGPSGTPGETGPSGSVGPVGPRGPSGPSGPPGKEGRSGHPGAMGPVGPRGPAGFTGPAGPPGPPGPPGHAGPSGGGYDGGDGGEYYRADQPERKPKDYEVDATLKSLNQQIEVILTPEGSRKNPARTCRDLRLSHPEWTSGFYWIDPNQGCTSDAIRVFCDFSSGETCIHANPDEITQKNWYINTSNKDKKHLWFGEILNGGTQFEYHDEGLTAKDMATQLAFMRLLANQASQNITYHCKNSIAYMDEETGNLKKAVILQGSNDVELRAEGNTRFTYSVLEDGCTKHTGEWGKTVIEYRTNKPSRLPILDIAPLDIGGHDQEIGFEIGPVCFK.

Residues 1-22 form the signal peptide; it reads MLSFVDLRSVLLLAVTLYLVTC. A Pyrrolidone carboxylic acid modification is found at Gln23. Positions 23–71 are cleaved as a propeptide — N-terminal propeptide; the sequence is QEVRRGPRGDKGPPGEQGPPGIPGRDGEDGLPGLPGPPGVPGLGGNFAA. Positions 26 to 35 are enriched in basic and acidic residues; that stretch reads RRGPRGDKGP. The disordered stretch occupies residues 26-1111; it reads RRGPRGDKGP…GDGGEYYRAD (1086 aa). Gln72 bears the Pyrrolidone carboxylic acid mark. Lys77 carries the post-translational modification Allysine. A compositionally biased stretch (low complexity) spans 99–108; the sequence is PGSQGFQGLP. Basic and acidic residues predominate over residues 132–146; it reads AGEDGHPGKSGRPGE. The residue at position 168 (Lys168) is a 5-hydroxylysine; alternate. An O-linked (Gal...) hydroxylysine; alternate glycan is attached at Lys168. Residues 218–267 show a composition bias toward low complexity; sequence PAGSAGSRGSDGSSGPVGPAGPIGSAGAPGLPGAPGAKGELGPAGNNGPT. The span at 276–290 shows a compositional bias: pro residues; the sequence is PGPPGSLGPAGPPGN. Residues 291 to 303 are compositionally biased toward low complexity; that stretch reads PGTNGVNGAKGTA. A compositionally biased stretch (gly residues) spans 304–322; it reads GLPGVGGAPGLPGGRGIPG. Over residues 327 to 336 the composition is skewed to low complexity; it reads AGPSGARGLA. Composition is skewed to gly residues over residues 340–349 and 403–412; these read GIAGGKGDTG and GRAGGIGPAG. Low complexity-rich tracts occupy residues 413–426 and 465–495; these read SRGS…RGPN and EGRS…NGEP. Gly residues-rich tracts occupy residues 523-532 and 586-595; these read GPAGLGGATG and GESGGAGPHG. Over residues 596–618 the composition is skewed to low complexity; that stretch reads PSGSRGPSGAPGPDGQKGEPGAA. Residues 619-628 show a composition bias toward gly residues; sequence GLNGGLGPSG. Composition is skewed to low complexity over residues 659 to 675, 687 to 701, and 708 to 726; these read NPGR…AGAP, SGPA…PRGA, and AGPA…AGHT. The segment covering 728–738 has biased composition (basic and acidic residues); that stretch reads AKGDRGAKGPK. Composition is skewed to low complexity over residues 741–767 and 776–788; these read AGSP…STGA and ATGF…RAGA. The segment covering 804 to 813 has biased composition (basic and acidic residues); sequence PGKDGSRGPR. Positions 852 to 869 are enriched in low complexity; sequence AGPSGVLGARGILGLPGT. The segment covering 874–883 has biased composition (gly residues); the sequence is GLPGGPGSNG. 2 stretches are compositionally biased toward low complexity: residues 884 to 912 and 947 to 966; these read EPGP…VGHS and PSGL…AGKS. Positions 967–976 are enriched in gly residues; sequence GNRGEGGPSG. Over residues 996–1014 the composition is skewed to basic and acidic residues; that stretch reads RGDKGEAGERGARGLDGRK. The segment covering 1019 to 1041 has biased composition (low complexity); the sequence is LSGLPGPSGTPGETGPSGSVGPV. A compositionally biased stretch (pro residues) spans 1080–1091; the sequence is AGPPGPPGPPGH. The segment covering 1093–1105 has biased composition (gly residues); that stretch reads GPSGGGYDGGDGG. Positions 1111–1355 are cleaved as a propeptide — C-terminal propeptide; it reads DQPERKPKDY…GFEIGPVCFK (245 aa). The region spanning 1120-1355 is the Fibrillar collagen NC1 domain; it reads YEVDATLKSL…GFEIGPVCFK (236 aa). 3 disulfide bridges follow: Cys1150–Cys1182, Cys1190–Cys1353, and Cys1261–Cys1306. Residues Asp1168, Asn1170, Gln1171, Cys1173, and Asp1176 each contribute to the Ca(2+) site. Asn1206 and Asn1256 each carry an N-linked (GlcNAc...) asparagine glycan.

Belongs to the fibrillar collagen family. In terms of assembly, trimers of one alpha 2(I) and two alpha 1(I) chains. In terms of processing, prolines at the third position of the tripeptide repeating unit (G-X-Y) are hydroxylated in some or all of the chains. Forms the fibrils of tendon, ligaments and bones. In bones the fibrils are mineralized with calcium hydroxyapatite.

It is found in the secreted. Its subcellular location is the extracellular space. The protein localises to the extracellular matrix. Type I collagen is a member of group I collagen (fibrillar forming collagen). This is Collagen alpha-2(I) chain (COL1A2) from Aquarana catesbeiana (American bullfrog).